The following is a 778-amino-acid chain: Melanoma-associated antigen D1 (778 aa).

3 disordered regions span residues 41-60, 78-123, and 182-333; these read PTNQATAAASPQSSQPPTAN, FKVQ…KGPN, and KAWN…PAWQ. Position 92 is a phosphotyrosine (Tyr-92). 5 stretches are compositionally biased toward polar residues: residues 104–118, 185–211, 225–240, 253–263, and 300–319; these read PNTQPKAAFKSQNAT, NDTTKAPTADTQTQNVNQAKMATSQAD, TAQTSADGSQAQNLES, NNLNVEENSSG, and LAWQNPSGWQNQTARQTPPA. Tandem repeats lie at residues 296 to 301, 302 to 307, 308 to 313, 332 to 337, 338 to 343, 344 to 349, 350 to 355, 356 to 361, 362 to 367, 368 to 373, 374 to 379, 380 to 385, 386 to 391, 392 to 397, 398 to 403, 404 to 409, 410 to 415, 416 to 421, and 422 to 427. Positions 296–444 are 22 X 6 AA tandem repeats of W-[PQ]-X-P-X-X; sequence WQTPLAWQNP…IPPDWQNLRP (149 aa). Residues 376 to 412 form a disordered region; that stretch reads NPPGWQTPPGWQTPPGWQGPPDWQGPPDWPLPPDWPL. Over residues 377–397 the composition is skewed to low complexity; sequence PPGWQTPPGWQTPPGWQGPPD. Residues 398 to 412 are compositionally biased toward pro residues; the sequence is WQGPPDWPLPPDWPL. The 20; approximate repeat unit spans residues 428–432; it reads WIPAD. 2 tandem repeats follow at residues 433 to 438 and 439 to 444. A compositionally biased stretch (low complexity) spans 440–455; that stretch reads QNLRPSPNLRPSPNSR. The interval 440 to 466 is disordered; the sequence is QNLRPSPNLRPSPNSRASQNPGAAQPR. The 199-residue stretch at 471-669 folds into the MAGE domain; sequence LQERANKLVK…RDWTAQFMEA (199 aa).

As to quaternary structure, interacts with DLX5, DLX7 and MSX2 and forms homomultimers. Interacts with UNC5A. Interacts with TRIM28 and PJA1. Interacts with NGFR/p75NTR and RORA. Expressed in bone marrow stromal cells from both multiple myeloma patients and healthy donors. Seems to be ubiquitously expressed.

The protein resides in the cytoplasm. It is found in the cell membrane. It localises to the nucleus. Involved in the apoptotic response after nerve growth factor (NGF) binding in neuronal cells. Inhibits cell cycle progression, and facilitates NGFR-mediated apoptosis. May act as a regulator of the function of DLX family members. May enhance ubiquitin ligase activity of RING-type zinc finger-containing E3 ubiquitin-protein ligases. Proposed to act through recruitment and/or stabilization of the Ubl-conjugating enzyme (E2) at the E3:substrate complex. Plays a role in the circadian rhythm regulation. May act as RORA co-regulator, modulating the expression of core clock genes such as BMAL1 and NFIL3, induced, or NR1D1, repressed. The polypeptide is Melanoma-associated antigen D1 (MAGED1) (Homo sapiens (Human)).